The sequence spans 845 residues: Probable inorganic carbon transporter subunit DabA (845 aa).

Residues 1–20 (MPMASGDESMSARSENPVQS) form a disordered region. Zn(2+) is bound by residues Cys-345, Asp-347, His-516, and Cys-531.

Belongs to the inorganic carbon transporter (TC 9.A.2) DabA family. In terms of assembly, forms a complex with DabB. The cofactor is Zn(2+).

It is found in the cell inner membrane. In terms of biological role, part of an energy-coupled inorganic carbon pump. This chain is Probable inorganic carbon transporter subunit DabA, found in Azotobacter vinelandii (strain DJ / ATCC BAA-1303).